The primary structure comprises 121 residues: Cytochrome B5-like protein (121 aa).

A helical membrane pass occupies residues 1-21; it reads MIAVIGLLLGFLVSALFLIQG. The interval 24-49 is disordered; the sequence is RRTNDNQEKKRSSSEPVEDVVRPKSY. Over residues 26–36 the composition is skewed to basic and acidic residues; the sequence is TNDNQEKKRSS. The Cytochrome b5 heme-binding domain occupies 46 to 121; sequence PKSYSKSEVA…IEDFYIGELH (76 aa). Residues H81 and H104 each coordinate heme.

It belongs to the cytochrome b5 family.

Its subcellular location is the membrane. The protein is Cytochrome B5-like protein of Arabidopsis thaliana (Mouse-ear cress).